The chain runs to 378 residues: Alpha-D-ribose 1-methylphosphonate 5-triphosphate diphosphatase (378 aa).

The protein belongs to the metallo-dependent hydrolases superfamily.

It catalyses the reaction alpha-D-ribose 1-methylphosphonate 5-triphosphate + H2O = alpha-D-ribose 1-methylphosphonate 5-phosphate + diphosphate + H(+). Catalyzes the hydrolysis of alpha-D-ribose 1-methylphosphonate triphosphate (RPnTP) to form alpha-D-ribose 1-methylphosphonate phosphate (PRPn) and diphosphate. The protein is Alpha-D-ribose 1-methylphosphonate 5-triphosphate diphosphatase (phnM) of Escherichia coli (strain K12).